We begin with the raw amino-acid sequence, 173 residues long: Cytochrome c-type biogenesis protein CcmE (173 aa).

Residues methionine 1–arginine 8 lie on the Cytoplasmic side of the membrane. The chain crosses the membrane as a helical; Signal-anchor for type II membrane protein span at residues phenylalanine 9 to alanine 29. Residues leucine 30–lysine 173 lie on the Periplasmic side of the membrane. Residues histidine 131 and tyrosine 135 each contribute to the heme site. The segment at glycine 152–lysine 173 is disordered. Residues alanine 156–lysine 173 show a composition bias toward basic and acidic residues.

Belongs to the CcmE/CycJ family.

The protein localises to the cell inner membrane. In terms of biological role, heme chaperone required for the biogenesis of c-type cytochromes. Transiently binds heme delivered by CcmC and transfers the heme to apo-cytochromes in a process facilitated by CcmF and CcmH. This is Cytochrome c-type biogenesis protein CcmE from Haemophilus influenzae (strain PittEE).